The chain runs to 95 residues: Large ribosomal subunit protein eL31 (95 aa).

This sequence belongs to the eukaryotic ribosomal protein eL31 family. Part of the 50S ribosomal subunit.

The polypeptide is Large ribosomal subunit protein eL31 (Pyrococcus furiosus (strain ATCC 43587 / DSM 3638 / JCM 8422 / Vc1)).